The sequence spans 511 residues: 2-isopropylmalate synthase (511 aa).

One can recognise a Pyruvate carboxyltransferase domain in the interval 5 to 267 (IQIFDTTLRD…QTQINLEETK (263 aa)). Mn(2+) contacts are provided by aspartate 14, histidine 202, histidine 204, and asparagine 238. The tract at residues 391–511 (KVETLQLQFV…NTKVEEGIHS (121 aa)) is regulatory domain.

Belongs to the alpha-IPM synthase/homocitrate synthase family. LeuA type 1 subfamily. In terms of assembly, homodimer. The cofactor is Mn(2+).

Its subcellular location is the cytoplasm. It catalyses the reaction 3-methyl-2-oxobutanoate + acetyl-CoA + H2O = (2S)-2-isopropylmalate + CoA + H(+). The protein operates within amino-acid biosynthesis; L-leucine biosynthesis; L-leucine from 3-methyl-2-oxobutanoate: step 1/4. Its function is as follows. Catalyzes the condensation of the acetyl group of acetyl-CoA with 3-methyl-2-oxobutanoate (2-ketoisovalerate) to form 3-carboxy-3-hydroxy-4-methylpentanoate (2-isopropylmalate). The chain is 2-isopropylmalate synthase from Staphylococcus saprophyticus subsp. saprophyticus (strain ATCC 15305 / DSM 20229 / NCIMB 8711 / NCTC 7292 / S-41).